We begin with the raw amino-acid sequence, 38 residues long: uncharacterized protein (38 aa).

This is an uncharacterized protein from Treponema pallidum (strain Nichols).